The sequence spans 197 residues: Lipoprotein signal peptidase (197 aa).

A run of 2 helical transmembrane segments spans residues 73–93 (SNAI…YLMI) and 97–117 (TIGS…NLID). Catalysis depends on residues Asp126 and Asp144. A helical membrane pass occupies residues 135-155 (YSFPVFNLADCFITIGVIILI).

The protein belongs to the peptidase A8 family.

The protein resides in the cell inner membrane. The catalysed reaction is Release of signal peptides from bacterial membrane prolipoproteins. Hydrolyzes -Xaa-Yaa-Zaa-|-(S,diacylglyceryl)Cys-, in which Xaa is hydrophobic (preferably Leu), and Yaa (Ala or Ser) and Zaa (Gly or Ala) have small, neutral side chains.. The protein operates within protein modification; lipoprotein biosynthesis (signal peptide cleavage). In terms of biological role, this protein specifically catalyzes the removal of signal peptides from prolipoproteins. The polypeptide is Lipoprotein signal peptidase (Rickettsia felis (strain ATCC VR-1525 / URRWXCal2) (Rickettsia azadi)).